Here is a 265-residue protein sequence, read N- to C-terminus: 4-hydroxy-tetrahydrodipicolinate reductase (265 aa).

NAD(+) is bound by residues Gly7 to Met12 and Asp33. Position 34 (Arg34) interacts with NADP(+). Residues Gly96–Thr98 and Ser120–Met123 each bind NAD(+). Catalysis depends on His153, which acts as the Proton donor/acceptor. His154 contributes to the (S)-2,3,4,5-tetrahydrodipicolinate binding site. Lys157 serves as the catalytic Proton donor. Residue Gly163 to Thr164 coordinates (S)-2,3,4,5-tetrahydrodipicolinate.

The protein belongs to the DapB family.

It localises to the cytoplasm. It carries out the reaction (S)-2,3,4,5-tetrahydrodipicolinate + NAD(+) + H2O = (2S,4S)-4-hydroxy-2,3,4,5-tetrahydrodipicolinate + NADH + H(+). The catalysed reaction is (S)-2,3,4,5-tetrahydrodipicolinate + NADP(+) + H2O = (2S,4S)-4-hydroxy-2,3,4,5-tetrahydrodipicolinate + NADPH + H(+). It participates in amino-acid biosynthesis; L-lysine biosynthesis via DAP pathway; (S)-tetrahydrodipicolinate from L-aspartate: step 4/4. Functionally, catalyzes the conversion of 4-hydroxy-tetrahydrodipicolinate (HTPA) to tetrahydrodipicolinate. The chain is 4-hydroxy-tetrahydrodipicolinate reductase from Burkholderia pseudomallei (strain 1106a).